The following is a 136-amino-acid chain: MIKPIVKDILFLGQKSEEATKNDMVVIDDLIDTLRANLEHCVGLAANMIGVKKRILVFTVGNLIVPMINPVILKKEKPYETEESCLSLIGFRKTKRYETIEVTYLDRNFNKKKQVFNGFTAQIIQHEMDHFEGIII.

2 residues coordinate Fe cation: C85 and H126. Residue E127 is part of the active site. H130 contributes to the Fe cation binding site.

It belongs to the polypeptide deformylase family. Fe(2+) is required as a cofactor.

It catalyses the reaction N-terminal N-formyl-L-methionyl-[peptide] + H2O = N-terminal L-methionyl-[peptide] + formate. Functionally, removes the formyl group from the N-terminal Met of newly synthesized proteins. Requires at least a dipeptide for an efficient rate of reaction. N-terminal L-methionine is a prerequisite for activity but the enzyme has broad specificity at other positions. This is Peptide deformylase from Clostridium beijerinckii (strain ATCC 51743 / NCIMB 8052) (Clostridium acetobutylicum).